A 470-amino-acid polypeptide reads, in one-letter code: UDP-glycosyltransferase 75C1 (470 aa).

The Proton acceptor role is filled by His16. His16 contacts an anthocyanidin. Positions 347, 362, 365, 366, 367, 370, 386, and 387 each coordinate UDP-alpha-D-glucose.

It belongs to the UDP-glycosyltransferase family. As to expression, expressed in flowers and fruits, especially in pulp, and, at lower levels, in seeds.

It is found in the cytoplasm. The protein resides in the nucleus. The catalysed reaction is 2-cis-(+)-abscisate + UDP-alpha-D-glucose = beta-D-glucopyranosyl cis-(+)-abscisate + UDP. The enzyme catalyses (indol-3-yl)acetate + UDP-alpha-D-glucose = 1-O-(indol-3-ylacetyl)-beta-D-glucose + UDP. Its function is as follows. Glucosyltransferase acting on both abscisic acid (ABA) and auxin (IAA). Required for ABA-mediated fruit ripening, seed germination, and negative responses to drought. The sequence is that of UDP-glycosyltransferase 75C1 from Solanum lycopersicum (Tomato).